Here is a 67-residue protein sequence, read N- to C-terminus: ATP synthase F(0) complex subunit 8 (67 aa).

A helical transmembrane segment spans residues 8 to 24 (TWFITIISSMITLFILF). Lys-54 carries the N6-acetyllysine; alternate modification. The residue at position 54 (Lys-54) is an N6-succinyllysine; alternate. Residue Lys-57 is modified to N6-acetyllysine.

It belongs to the ATPase protein 8 family. Component of the ATP synthase complex composed at least of ATP5F1A/subunit alpha, ATP5F1B/subunit beta, ATP5MC1/subunit c (homooctomer), MT-ATP6/subunit a, MT-ATP8/subunit 8, ATP5ME/subunit e, ATP5MF/subunit f, ATP5MG/subunit g, ATP5MK/subunit k, ATP5MJ/subunit j, ATP5F1C/subunit gamma, ATP5F1D/subunit delta, ATP5F1E/subunit epsilon, ATP5PF/subunit F6, ATP5PB/subunit b, ATP5PD/subunit d, ATP5PO/subunit OSCP. ATP synthase complex consists of a soluble F(1) head domain (subunits alpha(3) and beta(3)) - the catalytic core - and a membrane F(0) domain - the membrane proton channel (subunits c, a, 8, e, f, g, k and j). These two domains are linked by a central stalk (subunits gamma, delta, and epsilon) rotating inside the F1 region and a stationary peripheral stalk (subunits F6, b, d, and OSCP). Interacts with PRICKLE3.

The protein localises to the mitochondrion membrane. In terms of biological role, subunit 8, of the mitochondrial membrane ATP synthase complex (F(1)F(0) ATP synthase or Complex V) that produces ATP from ADP in the presence of a proton gradient across the membrane which is generated by electron transport complexes of the respiratory chain. ATP synthase complex consist of a soluble F(1) head domain - the catalytic core - and a membrane F(1) domain - the membrane proton channel. These two domains are linked by a central stalk rotating inside the F(1) region and a stationary peripheral stalk. During catalysis, ATP synthesis in the catalytic domain of F(1) is coupled via a rotary mechanism of the central stalk subunits to proton translocation. In vivo, can only synthesize ATP although its ATP hydrolase activity can be activated artificially in vitro. Part of the complex F(0) domain. The chain is ATP synthase F(0) complex subunit 8 from Mus musculus (Mouse).